A 215-amino-acid polypeptide reads, in one-letter code: Probable phosphoglycerate mutase GpmB (215 aa).

Substrate-binding positions include Arg-8 to Asn-15, Gln-21 to Gly-22, Arg-58, Arg-60, Glu-82 to Met-85, Arg-104 to Arg-105, and Gly-151 to Ile-152. His-9 functions as the Tele-phosphohistidine intermediate in the catalytic mechanism. Glu-82 acts as the Proton donor/acceptor in catalysis.

This sequence belongs to the phosphoglycerate mutase family. GpmB subfamily.

It catalyses the reaction (2R)-2-phosphoglycerate = (2R)-3-phosphoglycerate. Its pathway is carbohydrate degradation; glycolysis; pyruvate from D-glyceraldehyde 3-phosphate: step 3/5. This chain is Probable phosphoglycerate mutase GpmB, found in Klebsiella pneumoniae (strain 342).